The chain runs to 211 residues: Beta-crystallin B3 (211 aa).

A disordered region spans residues 1 to 21 (MTEQQSPPEQMVTGEGAGERG). An N-terminal arm region spans residues 1–23 (MTEQQSPPEQMVTGEGAGERGGN). 2 consecutive Beta/gamma crystallin 'Greek key' domains span residues 24 to 63 (YKIT…QVES) and 64 to 108 (GPWL…RPLQ). The segment at 109–113 (IDSPD) is connecting peptide. Beta/gamma crystallin 'Greek key' domains are found at residues 114–155 (HKIH…RALN) and 156–198 (GTWV…RRVR). The interval 200-211 (QQWHQRGSFENS) is C-terminal arm.

This sequence belongs to the beta/gamma-crystallin family. Homo/heterodimer, or complexes of higher-order. The structure of beta-crystallin oligomers seems to be stabilized through interactions between the N-terminal arms.

In terms of biological role, crystallins are the dominant structural components of the vertebrate eye lens. This is Beta-crystallin B3 (CRYBB3) from Gallus gallus (Chicken).